Here is a 147-residue protein sequence, read N- to C-terminus: Biogenesis of lysosome-related organelles complex 1 subunit 1 (147 aa).

2 disordered regions span residues 1-25 (MLTS…VRRK) and 125-147 (SSGA…PSAT).

It belongs to the BLOC1S1 family. In terms of assembly, component of the biogenesis of lysosome-related organelles complex-1 (BLOC-1) composed of Blos1, Blos2, Blos3, Blos4, Dysb, Muted, Pldn and Snapin. Interacts with Pldn.

Component of the biogenesis of lysosome-related organelles complex-1 (BLOC-1) involved in pigment granule biogenesis and membrane trafficking in synapses. In response to high synaptic activity at neuromuscular junctions, stabilizes Pldn protein levels and, together with Pldn, plays a role in promoting efficient synaptic vesicle recycling and re-formation through early endosomes. In Drosophila melanogaster (Fruit fly), this protein is Biogenesis of lysosome-related organelles complex 1 subunit 1.